A 314-amino-acid chain; its full sequence is L-lactate dehydrogenase (314 aa).

NAD(+)-binding positions include V16, D37, K42, Y68, and 82–83 (GV). Substrate-binding residues include Q85 and R91. NAD(+)-binding positions include S104, 121–123 (ASN), and T146. Residue 123 to 126 (NPVD) participates in substrate binding. 151-154 (DTTR) is a binding site for substrate. Positions 156 and 171 each coordinate beta-D-fructose 1,6-bisphosphate. The active-site Proton acceptor is the H178. Phosphotyrosine is present on Y223. Substrate is bound at residue T232.

It belongs to the LDH/MDH superfamily. LDH family. In terms of assembly, homotetramer.

It localises to the cytoplasm. The catalysed reaction is (S)-lactate + NAD(+) = pyruvate + NADH + H(+). It participates in fermentation; pyruvate fermentation to lactate; (S)-lactate from pyruvate: step 1/1. Allosterically activated by fructose 1,6-bisphosphate (FBP). In terms of biological role, catalyzes the conversion of lactate to pyruvate. The sequence is that of L-lactate dehydrogenase from Lactococcus lactis subsp. cremoris (strain MG1363).